Here is a 105-residue protein sequence, read N- to C-terminus: uncharacterized protein (105 aa).

Residues 33-100 (LYALDAGTTD…SEDLRVLVVF (68 aa)) form the Cupin type-2 domain.

This is an uncharacterized protein from Streptomyces coelicolor (strain ATCC BAA-471 / A3(2) / M145).